The primary structure comprises 239 residues: Urease accessory protein UreE (239 aa).

Residues 185–239 (VASPLDEPHGSGLHIHGIHSHGDGHSHSHDSHSHSHDSDHGHSHSHGDHDHDHKH) are disordered. Residues 204–239 (SHGDGHSHSHDSHSHSHDSDHGHSHSHGDHDHDHKH) show a composition bias toward basic and acidic residues.

The protein belongs to the UreE family.

The protein localises to the cytoplasm. Involved in urease metallocenter assembly. Binds nickel. Probably functions as a nickel donor during metallocenter assembly. This Yersinia frederiksenii protein is Urease accessory protein UreE.